The chain runs to 284 residues: Bifunctional protein FolD (284 aa).

NADP(+)-binding positions include 166–168 (GAS) and I232.

This sequence belongs to the tetrahydrofolate dehydrogenase/cyclohydrolase family. In terms of assembly, homodimer.

It catalyses the reaction (6R)-5,10-methylene-5,6,7,8-tetrahydrofolate + NADP(+) = (6R)-5,10-methenyltetrahydrofolate + NADPH. It carries out the reaction (6R)-5,10-methenyltetrahydrofolate + H2O = (6R)-10-formyltetrahydrofolate + H(+). It participates in one-carbon metabolism; tetrahydrofolate interconversion. Catalyzes the oxidation of 5,10-methylenetetrahydrofolate to 5,10-methenyltetrahydrofolate and then the hydrolysis of 5,10-methenyltetrahydrofolate to 10-formyltetrahydrofolate. This chain is Bifunctional protein FolD, found in Shewanella sp. (strain MR-7).